The chain runs to 565 residues: Polyadenylate-binding protein 1-A (565 aa).

4 RRM domains span residues 10–88, 98–175, 188–265, and 284–362; these read SSLY…WSQR, GNVF…PFKS, TNVF…RAQK, and VNLY…LAQR. The segment at 435–466 is disordered; the sequence is YARGQPRQNGPRQNGGQPRQNGPRPDVSGAQP. The span at 440–454 shows a compositional bias: polar residues; it reads PRQNGPRQNGGQPRQ. The region spanning 489-565 is the PABC domain; it reads SALNLQSIIN…REALEVLGSN (77 aa).

This sequence belongs to the polyadenylate-binding protein type-1 family.

It localises to the cytoplasm. It is found in the nucleus. Functionally, binds the poly(A) tail of mRNA. Appears to be an important mediator of the multiple roles of the poly(A) tail in mRNA biogenesis, stability and translation. In Dictyostelium discoideum (Social amoeba), this protein is Polyadenylate-binding protein 1-A (pabpc1A).